The primary structure comprises 240 residues: Probable transcriptional regulatory protein PBPRB1582 (240 aa).

Belongs to the TACO1 family.

It is found in the cytoplasm. In Photobacterium profundum (strain SS9), this protein is Probable transcriptional regulatory protein PBPRB1582.